Here is a 247-residue protein sequence, read N- to C-terminus: Aliphatic sulfonates import ATP-binding protein SsuB 1 (247 aa).

In terms of domain architecture, ABC transporter spans 7-222 (LSLSGVHKSF…KRSSYEFVET (216 aa)). Residue 39–46 (GKSGCGKS) coordinates ATP.

The protein belongs to the ABC transporter superfamily. Aliphatic sulfonates importer (TC 3.A.1.17.2) family. In terms of assembly, the complex is composed of two ATP-binding proteins (SsuB), two transmembrane proteins (SsuC) and a solute-binding protein (SsuA).

The protein localises to the cell membrane. It carries out the reaction ATP + H2O + aliphatic sulfonate-[sulfonate-binding protein]Side 1 = ADP + phosphate + aliphatic sulfonateSide 2 + [sulfonate-binding protein]Side 1.. Its function is as follows. Part of the ABC transporter complex SsuABC involved in aliphatic sulfonates import. Responsible for energy coupling to the transport system. The polypeptide is Aliphatic sulfonates import ATP-binding protein SsuB 1 (Shouchella clausii (strain KSM-K16) (Alkalihalobacillus clausii)).